Reading from the N-terminus, the 303-residue chain is GMP synthase [glutamine-hydrolyzing] subunit B (303 aa).

The region spanning 1–183 (MDVEKFVENA…LGLPKEISER (183 aa)) is the GMPS ATP-PPase domain. 28-34 (SGGVDSS) serves as a coordination point for ATP.

As to quaternary structure, heterodimer composed of a glutamine amidotransferase subunit (A) and a GMP-binding subunit (B).

It carries out the reaction XMP + L-glutamine + ATP + H2O = GMP + L-glutamate + AMP + diphosphate + 2 H(+). The protein operates within purine metabolism; GMP biosynthesis; GMP from XMP (L-Gln route): step 1/1. Its function is as follows. Catalyzes the synthesis of GMP from XMP. The polypeptide is GMP synthase [glutamine-hydrolyzing] subunit B (guaAB) (Archaeoglobus fulgidus (strain ATCC 49558 / DSM 4304 / JCM 9628 / NBRC 100126 / VC-16)).